The primary structure comprises 714 residues: Probable serine/threonine-protein kinase mkcB (714 aa).

Positions 1–12 (MKSILKKAKHFF) are enriched in basic residues. Disordered regions lie at residues 1-267 (MKSI…SSTS) and 281-349 (GSGS…EQKP). A compositionally biased stretch (basic and acidic residues) spans 23–35 (GGEKTAKESESQQ). Over residues 62-83 (SQSQPTTSALQTSTSLQPSSSL) the composition is skewed to low complexity. A compositionally biased stretch (polar residues) spans 84–94 (HQIPQSQSSLE). 2 stretches are compositionally biased toward low complexity: residues 95–111 (LTTNPTQQLPTTPTKQL) and 120–166 (PHSQ…TLTT). A compositionally biased stretch (polar residues) spans 167 to 177 (PVPSSENLATL). Low complexity-rich tracts occupy residues 178-241 (STST…QEQT) and 254-267 (LSQSTTSSSTSSTS). Residues 282 to 294 (SGSTKNKDSSSAP) are compositionally biased toward polar residues. Low complexity-rich tracts occupy residues 300-314 (NNNNNTVSSSNKNRS) and 324-337 (NNNNNNQNNHKNNN). Residues 438–687 (YKDSDQVGKG…AEELLKHPFI (250 aa)) enclose the Protein kinase domain. ATP-binding positions include 444 to 452 (VGKGGFGTV) and lysine 467. Aspartate 558 functions as the Proton acceptor in the catalytic mechanism.

This sequence belongs to the protein kinase superfamily. STE Ser/Thr protein kinase family. STE20 subfamily. It depends on Mg(2+) as a cofactor. As to expression, expressed at equal levels in prestalk and prespore cells.

The enzyme catalyses L-seryl-[protein] + ATP = O-phospho-L-seryl-[protein] + ADP + H(+). It catalyses the reaction L-threonyl-[protein] + ATP = O-phospho-L-threonyl-[protein] + ADP + H(+). This is Probable serine/threonine-protein kinase mkcB from Dictyostelium discoideum (Social amoeba).